A 914-amino-acid polypeptide reads, in one-letter code: Trafficking kinesin-binding protein 2 (914 aa).

Over residues 1 to 21 (MSQSQNAIFTSPTGEENLMNS) the composition is skewed to polar residues. Residues 1-30 (MSQSQNAIFTSPTGEENLMNSNHRDSESIT) are disordered. The 306-residue stretch at 48–353 (EEQLPQYRLK…QEEIKELRSR (306 aa)) folds into the HAP1 N-terminal domain. Positions 134 to 354 (QALLKRNHVL…EEIKELRSRS (221 aa)) form a coiled coil. The segment at 359–509 (HLYFSQSYGA…KQFFAEEWQR (151 aa)) is interaction with HGS. Serine 420 bears the Phosphoserine mark. 2 disordered regions span residues 447 to 482 (QQTEDKSLLNQGSSSEEVAGSSQKMGQPGPSGDSDL) and 765 to 787 (QPLPKSLAIPSTPPNSPSHSPCP). Polar residues predominate over residues 454–471 (LLNQGSSSEEVAGSSQKM). A compositionally biased stretch (pro residues) spans 775–787 (STPPNSPSHSPCP).

The protein belongs to the milton family. As to quaternary structure, interacts with GABA-A receptor and O-GlcNAc transferase. Interacts with HGS. Interacts with RHOT1/Miro-1 and RHOT2/Miro-2. Post-translationally, O-glycosylated. In terms of tissue distribution, widely expressed, with highest expression in heart.

The protein localises to the cytoplasm. It is found in the early endosome. It localises to the mitochondrion. In terms of biological role, may regulate endosome-to-lysosome trafficking of membrane cargo, including EGFR. This chain is Trafficking kinesin-binding protein 2 (TRAK2), found in Homo sapiens (Human).